Consider the following 94-residue polypeptide: Cell division topological specificity factor (94 aa).

This sequence belongs to the MinE family.

Functionally, prevents the cell division inhibition by proteins MinC and MinD at internal division sites while permitting inhibition at polar sites. This ensures cell division at the proper site by restricting the formation of a division septum at the midpoint of the long axis of the cell. In Synechococcus sp. (strain CC9311), this protein is Cell division topological specificity factor.